We begin with the raw amino-acid sequence, 227 residues long: Apoptosis regulator OPG045 (227 aa).

This sequence belongs to the orthopoxvirus OPG045 family. As to quaternary structure, homodimer. Interacts with host pro-apoptotic protein BCL2L11 (via BH3 domain). Interacts with host NLRP1. Interacts with host BAK.

The protein resides in the host mitochondrion outer membrane. Its subcellular location is the host cytoplasm. Functionally, plays a role in evading host innate immune response by inhibiting host inflammasome activation. Interacts with and inhibits NLR-mediated interleukin-1 beta/IL1B production in infected cells. At the host mitochondria outer membrane, interacts with the BH3 domain of host BAK and prevents BAK from binding active BAX. In turn, host apoptosis is inhibited. This Oryctolagus cuniculus (Rabbit) protein is Apoptosis regulator OPG045 (OPG045).